A 333-amino-acid polypeptide reads, in one-letter code: Glycogenin-1 (333 aa).

Residue Thr2 is modified to N-acetylthreonine. 4 residues coordinate UDP: Leu9, Thr11, Asn12, and Tyr15. UDP-alpha-D-glucose contacts are provided by Leu9, Thr11, Asn12, and Tyr15. At Ser44 the chain carries Phosphoserine; by PKA; in vitro. Arg77 is a UDP binding site. UDP-alpha-D-glucose-binding residues include Arg77, Lys86, Asp102, Ala103, Asp104, Asn133, Ser134, Asp160, Asp163, and Gln164. Residues Asp102, Ala103, and Asp104 each contribute to the UDP site. A Mn(2+)-binding site is contributed by Asp102. Asp104 serves as a coordination point for Mn(2+). An O-linked (Glc...) tyrosine glycan is attached at Tyr195. The UDP site is built by His212, Gly215, and Lys218. Residue His212 participates in Mn(2+) binding. UDP-alpha-D-glucose contacts are provided by Gly215 and Lys218. The interval 284-316 is interaction with GYS1; that stretch reads SHLSLGETPATTQPFVSSEERKERWEQGQADYM.

This sequence belongs to the glycosyltransferase 8 family. Glycogenin subfamily. In terms of assembly, part of the GYS1-GYG1 complex, a heterooctamer composed of a tetramer of GYS1 and 2 dimers of GYG1, where each GYS1 protomer binds to one GYG1 subunit (via GYG1 C-terminus); the GYS1 tetramer may dissociate from GYG1 dimers to continue glycogen polymerization on its own. May also form a heterooctamer complex with GYS2 (via GYG1 C-terminus). Requires Mn(2+) as cofactor. In terms of processing, self-glycosylated by the transfer of glucose residues from UDP-glucose to itself, forming an alpha-1,4-glycan of around 10 residues attached to Tyr-195. Phosphorylated. As to expression, detected in heart, skeletal muscle, brain and testis, and at lower levels in kidney.

Its subcellular location is the cytoplasm. It is found in the nucleus. The catalysed reaction is L-tyrosyl-[glycogenin] + UDP-alpha-D-glucose = alpha-D-glucosyl-L-tyrosyl-[glycogenin] + UDP + H(+). The enzyme catalyses [1,4-alpha-D-glucosyl](n)-L-tyrosyl-[glycogenin] + UDP-alpha-D-glucose = [1,4-alpha-D-glucosyl](n+1)-L-tyrosyl-[glycogenin] + UDP + H(+). The protein operates within glycan biosynthesis; glycogen biosynthesis. Functionally, glycogenin participates in the glycogen biosynthetic process along with glycogen synthase and glycogen branching enzyme. It catalyzes the formation of a short alpha (1,4)-glucosyl chain covalently attached via a glucose 1-O-tyrosyl linkage to internal tyrosine residues and these chains act as primers for the elongation reaction catalyzed by glycogen synthase. This chain is Glycogenin-1 (GYG1), found in Oryctolagus cuniculus (Rabbit).